A 260-amino-acid polypeptide reads, in one-letter code: UPF0246 protein BURPS668_1321 (260 aa).

The protein belongs to the UPF0246 family.

The chain is UPF0246 protein BURPS668_1321 from Burkholderia pseudomallei (strain 668).